The chain runs to 346 residues: Farnesyl diphosphate synthase 1 (346 aa).

3 residues coordinate isopentenyl diphosphate: Lys52, Arg55, and Gln90. Residues Asp97 and Asp101 each contribute to the Mg(2+) site. A DDXXD motif motif is present at residues 97–101 (DDIMD). Position 106 (Arg106) interacts with dimethylallyl diphosphate. Arg107 contributes to the isopentenyl diphosphate binding site. Residues Lys194, Thr195, and Gln233 each contribute to the dimethylallyl diphosphate site. Residues 236–240 (DDYLD) carry the DDXXD motif motif. Positions 250 and 259 each coordinate dimethylallyl diphosphate.

The protein belongs to the FPP/GGPP synthase family. Mg(2+) is required as a cofactor. Requires Mn(2+) as cofactor. As to expression, highly expressed in shoots.

The catalysed reaction is isopentenyl diphosphate + (2E)-geranyl diphosphate = (2E,6E)-farnesyl diphosphate + diphosphate. The enzyme catalyses isopentenyl diphosphate + dimethylallyl diphosphate = (2E)-geranyl diphosphate + diphosphate. It functions in the pathway isoprenoid biosynthesis; farnesyl diphosphate biosynthesis; farnesyl diphosphate from geranyl diphosphate and isopentenyl diphosphate: step 1/1. Its pathway is isoprenoid biosynthesis; geranyl diphosphate biosynthesis; geranyl diphosphate from dimethylallyl diphosphate and isopentenyl diphosphate: step 1/1. Functionally, catalyzes the sequential condensation of isopentenyl pyrophosphate (IPP) with the allylic pyrophosphates, dimethylallyl pyrophosphate (DMAPP), and then with the resultant geranylpyrophosphate (GPP) to the ultimate product farnesyl pyrophosphate (FPP). Has a 4.5 time greater affinity for GPP versus DMAPP. This Artemisia spiciformis (Spiked big sagebrush) protein is Farnesyl diphosphate synthase 1 (FDS-1).